The chain runs to 371 residues: Undecaprenyl-diphosphatase 1 (371 aa).

Helical transmembrane passes span 53-73 (PYLA…IVAF), 100-120 (LAWL…LLEH), and 126-146 (LGRP…MLLG). The tract at residues 152–226 (RSTTRGAPGP…PEAEDVTLPE (75 aa)) is disordered. The next 3 membrane-spanning stretches (helical) occupy residues 291-311 (FAFL…LPDL), 322-342 (QTLF…RFLA), and 351-371 (TPFA…FGIF).

Belongs to the UppP family.

It localises to the cell membrane. It carries out the reaction di-trans,octa-cis-undecaprenyl diphosphate + H2O = di-trans,octa-cis-undecaprenyl phosphate + phosphate + H(+). Functionally, catalyzes the dephosphorylation of undecaprenyl diphosphate (UPP). Confers resistance to bacitracin. In Frankia casuarinae (strain DSM 45818 / CECT 9043 / HFP020203 / CcI3), this protein is Undecaprenyl-diphosphatase 1.